The sequence spans 485 residues: MALPPFFGQGRPGPPPPQPPPPAPFGCPPPPLPSPAFPPPLPQRPGPFPGASAPFLQPPLALQPRASAEASRGGGGAGAFYPVPPPPLPPPPPQCRPFPGTDAGERPRPPPPGPGPPWSPRWPEAPPPPADVLGDAALQRLRDRQWLEAVFGTPRRAGCPVPQRTHAGPSLGEVRARLLRALRLVRRLRGLSQALREAEADGAAWVLLYSQTAPLRAELAERLQPLTQAAYVGEARRRLERVRRRRLRLRERAREREAEREAEAARAVEREQEIDRWRVKCVQEVEEKKREQELKAAADGVLSEVRKKQADTKRMVDILRALEKLRKLRKEAAARKGVCPPASADETFTHHLQRLRKLIKKRSELYEAEERALRVMLEGEQEEERKRELEKKQRKEKEKILLQKREIESKLFGDPDEFPLAHLLEPFRQYYLQAEHSLPALIQIRHDWDQYLVPSDHPKGNFVPQGWVLPPLPSNDIWATAVKLH.

A disordered region spans residues 1–133 (MALPPFFGQG…EAPPPPADVL (133 aa)). Over residues 12–48 (PGPPPPQPPPPAPFGCPPPPLPSPAFPPPLPQRPGPF) the composition is skewed to pro residues. Residues 49–71 (PGASAPFLQPPLALQPRASAEAS) are compositionally biased toward low complexity. Composition is skewed to pro residues over residues 82–96 (PVPPPPLPPPPPQCR) and 109–130 (PPPPGPGPPWSPRWPEAPPPPA). Coiled-coil stretches lie at residues 232–335 (VGEA…AAAR) and 362–411 (RSEL…ESKL).

Interacts with RBM40. Component of the U11/U12 snRNPs that are part of the U12-type spliceosome.

The protein localises to the nucleus. Functionally, promotes apoptosis when overexpressed. In Homo sapiens (Human), this protein is Programmed cell death protein 7 (PDCD7).